The sequence spans 318 residues: Electron transfer flavoprotein subunit alpha (318 aa).

Position 257-285 (257-285 (LYIALGISGAIQHRAGMQTSKTIVAVNKD)) interacts with FAD.

It belongs to the ETF alpha-subunit/FixB family. As to quaternary structure, heterodimer of an alpha and a beta subunit. The cofactor is FAD.

The electron transfer flavoprotein serves as a specific electron acceptor for other dehydrogenases. It transfers the electrons to the main respiratory chain via ETF-ubiquinone oxidoreductase (ETF dehydrogenase). The polypeptide is Electron transfer flavoprotein subunit alpha (etfA) (Mycobacterium leprae (strain TN)).